Reading from the N-terminus, the 195-residue chain is Orotate phosphoribosyltransferase (195 aa).

Residues Arg87, Lys91, and 112–120 (DDVATTGGS) contribute to the 5-phospho-alpha-D-ribose 1-diphosphate site. Residues Thr116 and Arg144 each contribute to the orotate site.

It belongs to the purine/pyrimidine phosphoribosyltransferase family. PyrE subfamily. Homodimer. It depends on Mg(2+) as a cofactor.

The enzyme catalyses orotidine 5'-phosphate + diphosphate = orotate + 5-phospho-alpha-D-ribose 1-diphosphate. It functions in the pathway pyrimidine metabolism; UMP biosynthesis via de novo pathway; UMP from orotate: step 1/2. Functionally, catalyzes the transfer of a ribosyl phosphate group from 5-phosphoribose 1-diphosphate to orotate, leading to the formation of orotidine monophosphate (OMP). The chain is Orotate phosphoribosyltransferase from Sulfurisphaera tokodaii (strain DSM 16993 / JCM 10545 / NBRC 100140 / 7) (Sulfolobus tokodaii).